Reading from the N-terminus, the 142-residue chain is Large ribosomal subunit protein bL19 (142 aa).

Belongs to the bacterial ribosomal protein bL19 family.

In terms of biological role, this protein is located at the 30S-50S ribosomal subunit interface and may play a role in the structure and function of the aminoacyl-tRNA binding site. The polypeptide is Large ribosomal subunit protein bL19 (Psychrobacter cryohalolentis (strain ATCC BAA-1226 / DSM 17306 / VKM B-2378 / K5)).